An 889-amino-acid polypeptide reads, in one-letter code: Chitin synthase I (889 aa).

An N-linked (GlcNAc...) asparagine glycan is attached at Asn-43. The disordered stretch occupies residues 94-138 (GEYFDGYNQGHPPQEHQAYDDDGQPLIEDQHGYSDNPQHQTQTPA). The segment covering 126-137 (YSDNPQHQTQTP) has biased composition (polar residues). N-linked (GlcNAc...) asparagine glycosylation occurs at Asn-199. The next 9 membrane-spanning stretches (helical) occupy residues 431-451 (SAFGFISVLPGAFSAYRYVAL), 530-550 (RWLNGSFFAAIYAIAHFYEFF), 560-580 (LAFFVEFVFNTINMIFAWFAI), 606-626 (ILGVVFTWLYGVFLMTCFVLS), 641-661 (MVWFWAIIMIYLMFAAIFIAV), 687-707 (TLIISVMSTFGIWLIASIIMF), 716-736 (FIQYMLLTPTYTNVLNVYAFC), 815-835 (GVVLIWMITNFALAALVLSSA), and 861-881 (IVLWSVAVLSGFKFLGAMWFL).

It belongs to the chitin synthase family. Class I subfamily. As to expression, expressed in hyphal bodies.

It is found in the cell membrane. It catalyses the reaction [(1-&gt;4)-N-acetyl-beta-D-glucosaminyl](n) + UDP-N-acetyl-alpha-D-glucosamine = [(1-&gt;4)-N-acetyl-beta-D-glucosaminyl](n+1) + UDP + H(+). Polymerizes chitin, a structural polymer of the cell wall and septum, by transferring the sugar moiety of UDP-GlcNAc to the non-reducing end of the growing chitin polymer. Contributes to the production of conidia and the ability of fungal conidia to germinate. Not involved in fungal stress tolerances. The protein is Chitin synthase I of Metarhizium acridum (strain CQMa 102).